The sequence spans 123 residues: Small ribosomal subunit protein uS12 (123 aa).

The disordered stretch occupies residues 1–26 (MPTINQLVRKPRKSRSSLNKAPALQH). Asp90 carries the post-translational modification 3-methylthioaspartic acid.

This sequence belongs to the universal ribosomal protein uS12 family. As to quaternary structure, part of the 30S ribosomal subunit. Contacts proteins S8 and S17. May interact with IF1 in the 30S initiation complex.

Functionally, with S4 and S5 plays an important role in translational accuracy. In terms of biological role, interacts with and stabilizes bases of the 16S rRNA that are involved in tRNA selection in the A site and with the mRNA backbone. Located at the interface of the 30S and 50S subunits, it traverses the body of the 30S subunit contacting proteins on the other side and probably holding the rRNA structure together. The combined cluster of proteins S8, S12 and S17 appears to hold together the shoulder and platform of the 30S subunit. The sequence is that of Small ribosomal subunit protein uS12 from Ehrlichia chaffeensis (strain ATCC CRL-10679 / Arkansas).